Here is a 582-residue protein sequence, read N- to C-terminus: uncharacterized protein (582 aa).

The next 12 helical transmembrane spans lie at Leu29–Leu49, Ile117–Ala137, Val155–Val175, Tyr225–Leu245, Phe254–Ile274, Ala287–Ile307, Tyr329–Val349, Ser376–Ile396, Ile432–Ile452, Leu458–Ser478, Ile491–Phe511, and Ile523–Ile543.

The protein resides in the cell membrane. This is an uncharacterized protein from Mycoplasmoides gallisepticum (strain R(low / passage 15 / clone 2)) (Mycoplasma gallisepticum).